The following is a 219-amino-acid chain: Large ribosomal subunit protein uL3 (219 aa).

Residues 133–153 (GRASHGNSRSHNVPGSIGMAQ) form a disordered region. Gln153 is subject to N5-methylglutamine.

This sequence belongs to the universal ribosomal protein uL3 family. Part of the 50S ribosomal subunit. Forms a cluster with proteins L14 and L19. Post-translationally, methylated by PrmB.

Its function is as follows. One of the primary rRNA binding proteins, it binds directly near the 3'-end of the 23S rRNA, where it nucleates assembly of the 50S subunit. In Burkholderia mallei (strain NCTC 10247), this protein is Large ribosomal subunit protein uL3.